The following is a 434-amino-acid chain: Enolase (434 aa).

(2R)-2-phosphoglycerate is bound at residue Gln163. Residue Glu205 is the Proton donor of the active site. The Mg(2+) site is built by Asp242, Glu291, and Asp318. (2R)-2-phosphoglycerate is bound by residues Lys343, Arg372, Ser373, and Lys394. Lys343 (proton acceptor) is an active-site residue.

The protein belongs to the enolase family. Mg(2+) serves as cofactor.

It is found in the cytoplasm. The protein resides in the secreted. Its subcellular location is the cell surface. The catalysed reaction is (2R)-2-phosphoglycerate = phosphoenolpyruvate + H2O. It participates in carbohydrate degradation; glycolysis; pyruvate from D-glyceraldehyde 3-phosphate: step 4/5. In terms of biological role, catalyzes the reversible conversion of 2-phosphoglycerate (2-PG) into phosphoenolpyruvate (PEP). It is essential for the degradation of carbohydrates via glycolysis. This is Enolase from Streptococcus sanguinis (strain SK36).